The chain runs to 177 residues: Large ribosomal subunit protein uL6 (177 aa).

It belongs to the universal ribosomal protein uL6 family. In terms of assembly, part of the 50S ribosomal subunit.

In terms of biological role, this protein binds to the 23S rRNA, and is important in its secondary structure. It is located near the subunit interface in the base of the L7/L12 stalk, and near the tRNA binding site of the peptidyltransferase center. The protein is Large ribosomal subunit protein uL6 of Beijerinckia indica subsp. indica (strain ATCC 9039 / DSM 1715 / NCIMB 8712).